A 245-amino-acid polypeptide reads, in one-letter code: tRNA1(Val) (adenine(37)-N6)-methyltransferase (245 aa).

This sequence belongs to the methyltransferase superfamily. tRNA (adenine-N(6)-)-methyltransferase family.

It is found in the cytoplasm. The catalysed reaction is adenosine(37) in tRNA1(Val) + S-adenosyl-L-methionine = N(6)-methyladenosine(37) in tRNA1(Val) + S-adenosyl-L-homocysteine + H(+). In terms of biological role, specifically methylates the adenine in position 37 of tRNA(1)(Val) (anticodon cmo5UAC). The chain is tRNA1(Val) (adenine(37)-N6)-methyltransferase from Klebsiella pneumoniae subsp. pneumoniae (strain ATCC 700721 / MGH 78578).